The sequence spans 506 residues: Glutamate--tRNA ligase (506 aa).

The 'HIGH' region motif lies at 23–33; that stretch reads PSPTGTPHVGL. A 'KMSKS' region motif is present at residues 267–271; sequence KLSKR. Lysine 270 lines the ATP pocket.

It belongs to the class-I aminoacyl-tRNA synthetase family. Glutamate--tRNA ligase type 1 subfamily. In terms of assembly, monomer.

It is found in the cytoplasm. The enzyme catalyses tRNA(Glu) + L-glutamate + ATP = L-glutamyl-tRNA(Glu) + AMP + diphosphate. Functionally, catalyzes the attachment of glutamate to tRNA(Glu) in a two-step reaction: glutamate is first activated by ATP to form Glu-AMP and then transferred to the acceptor end of tRNA(Glu). The polypeptide is Glutamate--tRNA ligase (Clavibacter michiganensis subsp. michiganensis (strain NCPPB 382)).